A 494-amino-acid chain; its full sequence is Glycerol kinase 1 (494 aa).

Thr12 provides a ligand contact to ADP. ATP is bound by residues Thr12, Thr13, and Ser14. Residue Thr12 coordinates sn-glycerol 3-phosphate. An ADP-binding site is contributed by Arg16. Sn-glycerol 3-phosphate contacts are provided by Arg82, Glu83, Tyr134, and Asp243. Glycerol-binding residues include Arg82, Glu83, Tyr134, Asp243, and Gln244. ADP is bound by residues Thr265 and Gly308. 4 residues coordinate ATP: Thr265, Gly308, Gln312, and Gly408. ADP is bound by residues Gly408 and Asn412.

The protein belongs to the FGGY kinase family.

It carries out the reaction glycerol + ATP = sn-glycerol 3-phosphate + ADP + H(+). It functions in the pathway polyol metabolism; glycerol degradation via glycerol kinase pathway; sn-glycerol 3-phosphate from glycerol: step 1/1. Inhibited by fructose 1,6-bisphosphate (FBP). Key enzyme in the regulation of glycerol uptake and metabolism. Catalyzes the phosphorylation of glycerol to yield sn-glycerol 3-phosphate. The protein is Glycerol kinase 1 of Pseudomonas aeruginosa (strain ATCC 15692 / DSM 22644 / CIP 104116 / JCM 14847 / LMG 12228 / 1C / PRS 101 / PAO1).